The primary structure comprises 185 residues: MCYLSRMSSQQMQLTISGFENRIKILEDLMNEFDSNLYIRLKRECDFKLPKEYDVSIHALTILMKRHLSNMEPIDCYQDLDTGTLQTMLIFCCTLRMIEHYEKSLSNINFFSLSNDLKRLEEYNTSCSVLLSLYQRQLKKISTTIESYYLADTLRHNQNILNLCERIYNIQKLLNKREKASVLRH.

The protein resides in the cytoplasm. Required for correct meiotic chromosome segregation. The polypeptide is Meiotically up-regulated gene 5 protein (mug5) (Schizosaccharomyces pombe (strain 972 / ATCC 24843) (Fission yeast)).